A 312-amino-acid chain; its full sequence is Putative S-adenosyl-L-methionine-dependent methyltransferase BCG_1768c (312 aa).

S-adenosyl-L-methionine contacts are provided by residues D130 and 159–160 (DL).

It belongs to the UPF0677 family.

Its function is as follows. Exhibits S-adenosyl-L-methionine-dependent methyltransferase activity. This is Putative S-adenosyl-L-methionine-dependent methyltransferase BCG_1768c from Mycobacterium bovis (strain BCG / Pasteur 1173P2).